The chain runs to 473 residues: Mitochondrial adenyl nucleotide antiporter SLC25A24-B (473 aa).

The segment at 1–173 (MLEQVQKFLL…RYWKHSTVLD (173 aa)) is regulatory N-terminal domain. At 1-197 (MLEQVQKFLL…EKKTGQWWKQ (197 aa)) the chain is on the mitochondrial intermembrane side. 4 EF-hand domains span residues 19 to 54 (DSQS…MGME), 55 to 88 (VGKG…EEHE), 86 to 121 (EHEK…LGIK), and 122 to 157 (ISLD…NPAD). Ca(2+) contacts are provided by Asp32, Asn34, Asp36, Lys38, Glu43, Asp68, Asn70, Asp72, His74, Glu79, Asp99, Asn101, Asp103, Lys105, Glu110, Asp135, Asp137, Thr139, Thr141, and Glu146. The segment at 159–168 (IQQIIRYWKH) is linker region. The C-terminal transmembrane transporter domain stretch occupies residues 174 to 473 (IGDSLTIPDE…YEKMKVQLGI (300 aa)). Solcar repeat units follow at residues 192–277 (GQWW…YKKL), 285–370 (LGTA…LKNY), and 382–470 (PGVL…MKVQ). The chain crosses the membrane as a helical span at residues 198 to 215 (LMAGGMAGAVSRTGTAPL). The Mitochondrial matrix portion of the chain corresponds to 216 to 251 (DRLKVMMQVHGSKGNSNIITGLKQMVKEGGIRSLWR). The helical transmembrane segment at 252-271 (GNGVNVIKIAPETAMKFWAY) threads the bilayer. Over 272–294 (EQYKKLFTSESGKLGTAERFVAG) the chain is Mitochondrial intermembrane. The chain crosses the membrane as a helical span at residues 295-308 (SLAGATAQTSIYPM). At 309–344 (EVLKTRLAVGRTGQYSGMFDCAKKIMQKEGIRAFYK) the chain is on the mitochondrial matrix side. A helical transmembrane segment spans residues 345–364 (GYIPNILGIIPYAGIDLAIY). Residues 365-387 (ETLKNYWLQNHAKDSANPGVLVL) lie on the Mitochondrial intermembrane side of the membrane. A helical transmembrane segment spans residues 388 to 405 (LGCGTASSTCGQLASYPL). At 406 to 444 (ALIRTRMQAQASIEGAPQLNMGGLFRKIVAKEGFLGLYR) the chain is on the mitochondrial matrix side. Residues 445 to 464 (GIGPNFLKVLPAVSISYVVY) traverse the membrane as a helical segment. Residues 465–473 (EKMKVQLGI) lie on the Mitochondrial intermembrane side of the membrane.

The protein belongs to the mitochondrial carrier (TC 2.A.29) family. As to quaternary structure, monomer.

It is found in the mitochondrion inner membrane. The catalysed reaction is Mg(2+)(out) + phosphate(in) + ATP(out) = Mg(2+)(in) + phosphate(out) + ATP(in). It catalyses the reaction ADP(out) + phosphate(in) + H(+)(out) = ADP(in) + phosphate(out) + H(+)(in). It carries out the reaction AMP(out) + phosphate(in) = AMP(in) + phosphate(out). The enzyme catalyses phosphate(in) + ATP(out) + 2 H(+)(out) = phosphate(out) + ATP(in) + 2 H(+)(in). The catalysed reaction is dADP(in) + ADP(out) = dADP(out) + ADP(in). It catalyses the reaction Mg(2+)(in) + ADP(out) + ATP(in) + H(+)(out) = Mg(2+)(out) + ADP(in) + ATP(out) + H(+)(in). It carries out the reaction ADP(out) + diphosphate(in) = ADP(in) + diphosphate(out). The enzyme catalyses dAMP(in) + ADP(out) + H(+)(out) = dAMP(out) + ADP(in) + H(+)(in). The catalysed reaction is 3'-AMP(in) + ADP(out) + H(+)(out) = 3'-AMP(out) + ADP(in) + H(+)(in). It catalyses the reaction dAMP(out) + phosphate(in) = dAMP(in) + phosphate(out). It carries out the reaction 3'-AMP(out) + phosphate(in) = 3'-AMP(in) + phosphate(out). The enzyme catalyses dADP(out) + phosphate(in) + H(+)(out) = dADP(in) + phosphate(out) + H(+)(in). Its activity is regulated as follows. Activated by an increase in cytosolic calcium levels that induce a conformational change of the N-terminal regulatory domain, uncapping the channel and allowing transport. Inhibited by bathophenanthroline, mersalyl, p-hydroxymercuribenzoate, bromcresol purple and tannic acid. Electroneutral antiporter that mediates the transport of adenyl nucleotides through the inner mitochondrial membrane. Originally identified as an ATP-magnesium/inorganic phosphate antiporter, it also acts as a broad specificity adenyl nucleotide antiporter. By regulating the mitochondrial matrix adenyl nucleotide pool could adapt to changing cellular energetic demands and indirectly regulate adenyl nucleotide-dependent metabolic pathways. The sequence is that of Mitochondrial adenyl nucleotide antiporter SLC25A24-B (slc25a24-b) from Xenopus laevis (African clawed frog).